Here is a 251-residue protein sequence, read N- to C-terminus: Ubiquinone/menaquinone biosynthesis C-methyltransferase UbiE (251 aa).

Residues T74, D95, and 123–124 (NA) contribute to the S-adenosyl-L-methionine site.

Belongs to the class I-like SAM-binding methyltransferase superfamily. MenG/UbiE family.

The catalysed reaction is a 2-demethylmenaquinol + S-adenosyl-L-methionine = a menaquinol + S-adenosyl-L-homocysteine + H(+). It carries out the reaction a 2-methoxy-6-(all-trans-polyprenyl)benzene-1,4-diol + S-adenosyl-L-methionine = a 5-methoxy-2-methyl-3-(all-trans-polyprenyl)benzene-1,4-diol + S-adenosyl-L-homocysteine + H(+). It functions in the pathway quinol/quinone metabolism; menaquinone biosynthesis; menaquinol from 1,4-dihydroxy-2-naphthoate: step 2/2. The protein operates within cofactor biosynthesis; ubiquinone biosynthesis. Its function is as follows. Methyltransferase required for the conversion of demethylmenaquinol (DMKH2) to menaquinol (MKH2) and the conversion of 2-polyprenyl-6-methoxy-1,4-benzoquinol (DDMQH2) to 2-polyprenyl-3-methyl-6-methoxy-1,4-benzoquinol (DMQH2). The polypeptide is Ubiquinone/menaquinone biosynthesis C-methyltransferase UbiE (Edwardsiella ictaluri (strain 93-146)).